The chain runs to 344 residues: Beta-hexosaminidase (344 aa).

Substrate contacts are provided by residues Asp60, Arg68, Arg132, and 162 to 163 (KH). Residue His175 is the Proton donor/acceptor of the active site. Catalysis depends on Asp247, which acts as the Nucleophile.

Belongs to the glycosyl hydrolase 3 family. NagZ subfamily.

Its subcellular location is the cytoplasm. It catalyses the reaction Hydrolysis of terminal non-reducing N-acetyl-D-hexosamine residues in N-acetyl-beta-D-hexosaminides.. It functions in the pathway cell wall biogenesis; peptidoglycan recycling. Plays a role in peptidoglycan recycling by cleaving the terminal beta-1,4-linked N-acetylglucosamine (GlcNAc) from peptide-linked peptidoglycan fragments, giving rise to free GlcNAc, anhydro-N-acetylmuramic acid and anhydro-N-acetylmuramic acid-linked peptides. The chain is Beta-hexosaminidase from Haemophilus ducreyi (strain 35000HP / ATCC 700724).